A 306-amino-acid chain; its full sequence is Protein-methionine-sulfoxide reductase catalytic subunit MsrP (306 aa).

Positions 1–44 form a signal peptide, tat-type signal; the sequence is MLIRHAPDLTDNDVTGHGLYLRRRDFIGGAAGLGLMAAAGSASA. Residues N69, 72–73, C127, T162, N210, R215, and 226–228 each bind Mo-molybdopterin; these read YE and GIK.

The protein belongs to the MsrP family. Heterodimer of a catalytic subunit (MsrP) and a heme-binding subunit (MsrQ). The cofactor is Mo-molybdopterin. Post-translationally, predicted to be exported by the Tat system. The position of the signal peptide cleavage has not been experimentally proven.

It is found in the periplasm. The enzyme catalyses L-methionyl-[protein] + a quinone + H2O = L-methionyl-(S)-S-oxide-[protein] + a quinol. It carries out the reaction L-methionyl-[protein] + a quinone + H2O = L-methionyl-(R)-S-oxide-[protein] + a quinol. Its function is as follows. Part of the MsrPQ system that repairs oxidized periplasmic proteins containing methionine sulfoxide residues (Met-O), using respiratory chain electrons. Thus protects these proteins from oxidative-stress damage caused by reactive species of oxygen and chlorine generated by the host defense mechanisms. MsrPQ is essential for the maintenance of envelope integrity under bleach stress, rescuing a wide series of structurally unrelated periplasmic proteins from methionine oxidation. The catalytic subunit MsrP is non-stereospecific, being able to reduce both (R-) and (S-) diastereoisomers of methionine sulfoxide. In Caulobacter sp. (strain K31), this protein is Protein-methionine-sulfoxide reductase catalytic subunit MsrP.